We begin with the raw amino-acid sequence, 198 residues long: Cyclin-dependent kinase inhibitor 1B (198 aa).

The segment covering 1–12 (MSNVRVSNGSPT) has biased composition (polar residues). The disordered stretch occupies residues 1–30 (MSNVRVSNGSPTSERRDAKQAEYPKPSACR). Position 10 is a phosphoserine; by UHMK1 (Ser10). Residues 13–22 (SERRDAKQAE) show a composition bias toward basic and acidic residues. Residues 51-91 (DMEEASQNKWNFDFQNHKPLEGKYEWQEVEKGSLPEFYYRP) are interaction with CDK2. Residue Tyr74 is modified to Phosphotyrosine; by SRC. Positions 87-198 (FYYRPPRPPK…KKPGLRRRQT (112 aa)) are disordered. Tyr88 is subject to Phosphotyrosine; by ABL, LYN and SRC. The residue at position 89 (Tyr89) is a Phosphotyrosine. Polar residues predominate over residues 104 to 113 (QESQDVSGTR). The span at 126-137 (EDTHLVDQKTDA) shows a compositional bias: basic and acidic residues. The short motif at 153-169 (KRPATDDSSPQNKRANR) is the Nuclear localization signal element. Thr157 is subject to Phosphothreonine; by CaMK1, PKB/AKT1 and PIM1. Thr170 bears the Phosphothreonine mark. Residues 175–186 (SDGSPNAGSVEQ) are compositionally biased toward polar residues. At Thr187 the chain carries Phosphothreonine; by PKB/AKT1, CDK1 and CDK2. Position 198 is a phosphothreonine; by CaMK1, PKB/AKT1, RPS6KA1, RPS6KA3 and PIM1 (Thr198).

Belongs to the CDI family. As to quaternary structure, forms a ternary complex composed of CCNE1, CDK2 and CDKN1B. Interacts directly with CCNE1; the interaction is inhibited by CDK2-dependent phosphorylation on Thr-187. Interacts with COPS5, subunit of the COP9 signalosome complex; the interaction leads to CDKN1B degradation. Interacts with NUP50; the interaction leads to nuclear import and degradation of phosphorylated CDKN1B. Interacts with CCND1 and SNX6. Interacts (Thr-198-phosphorylated form) with 14-3-3 proteins, binds strongly YWHAQ, weakly YWHAE and YWHAH, but not YWHAB nor YWHAZ; the interaction with YWHAQ results in translocation to the cytoplasm. Interacts with AKT1 and LYN; the interactions lead to cytoplasmic mislocation, phosphorylation of CDKN1B and inhibition of cell cycle arrest. Forms a ternary complex with CCNA2 and CDK2; CDKN1B inhibits the kinase activity of CDK2 through conformational rearrangements. Interacts (unphosphorylated form) with CDK2. Forms a complex with CDK2 and SPDYA, but does not directly interact with SPDYA. Forms a ternary complex composed of cyclin D, CDK4 and CDKN1B. Interacts (phosphorylated on Tyr-88 and Tyr-89) with CDK4; the interaction is required for cyclin D and CDK4 complex assembly, induces nuclear translocation and activates the CDK4 kinase activity. Interacts with GRB2. Interacts with PIM1. Identified in a complex with SKP1, SKP2 and CKS1B. Interacts with UHMK1; the interaction leads to cytoplasmic mislocation, phosphorylation of CDKN1B and inhibition of cell cycle arrest. Also interacts with CDK1. Dephosphorylated on Thr-187 by PPM1H, leading to CDKN1B stability. Post-translationally, phosphorylated; phosphorylation occurs on serine, threonine and tyrosine residues. Phosphorylation on Ser-10 is the major site of phosphorylation in resting cells, takes place at the G(0)-G(1) phase and leads to protein stability. Phosphorylation on other sites is greatly enhanced by mitogens, growth factors, cMYC and in certain cancer cell lines. The phosphorylated form found in the cytoplasm is inactivate. Phosphorylation on Thr-198 is required for interaction with 14-3-3 proteins. Phosphorylation on Thr-187, by CDK1 and CDK2 leads to protein ubiquitination and proteasomal degradation. Tyrosine phosphorylation promotes this process. Phosphorylation by PKB/AKT1 can be suppressed by LY294002, an inhibitor of the catalytic subunit of PI3K. Phosphorylation on Tyr-88 and Tyr-89 has no effect on binding CDK2, but is required for binding CDK4. Dephosphorylated on tyrosine residues by G-CSF. Dephosphorylated on Thr-187 by PPM1H, leading to CDKN1B stability. Ubiquitinated; in the cytoplasm by the KPC complex (composed of RNF123/KPC1 and UBAC1/KPC2) and, in the nucleus, by SCF(SKP2). The latter requires prior phosphorylation on Thr-187. Ubiquitinated; by a TRIM21-containing SCF(SKP2)-like complex; leads to its degradation. In terms of processing, subject to degradation in the lysosome. Interaction with SNX6 promotes lysosomal degradation.

Its subcellular location is the nucleus. The protein localises to the cytoplasm. It is found in the endosome. Its function is as follows. Important regulator of cell cycle progression. Inhibits the kinase activity of CDK2 bound to cyclin A, but has little inhibitory activity on CDK2 bound to SPDYA. Involved in G1 arrest. Potent inhibitor of cyclin E- and cyclin A-CDK2 complexes. Forms a complex with cyclin type D-CDK4 complexes and is involved in the assembly, stability, and modulation of CCND1-CDK4 complex activation. Acts either as an inhibitor or an activator of cyclin type D-CDK4 complexes depending on its phosphorylation state and/or stoichometry. The polypeptide is Cyclin-dependent kinase inhibitor 1B (CDKN1B) (Canis lupus familiaris (Dog)).